The following is an 87-amino-acid chain: Kawaguchipeptin peptide (87 aa).

A propeptide spanning residues 1-33 (MKNPTLLPKLTAPVERPAVTSSDLKQASSVDAA) is cleaved from the precursor. Residue tryptophan 34 is the site of 3'-prenyl-2',N2-cyclotryptophan; partial attachment. The segment at residues 34 to 44 (WLNGDNNWSTP) is a cross-link (cyclopeptide (Trp-Pro)). Leucine 35 carries the D-leucine; partial modification. Tryptophan 41 carries the 3'-prenyl-2',N2-cyclotryptophan; partial lipid modification. Positions 45–51 (FAGVNAA) are excised as a propeptide. A lipid anchor (3'-prenyl-2',N2-cyclotryptophan; partial) is attached at tryptophan 52. Residues 52-62 (WLNGDNNWSTP) constitute a cross-link (cyclopeptide (Trp-Pro)). Leucine 53 is subject to D-leucine; partial. A lipid anchor (3'-prenyl-2',N2-cyclotryptophan; partial) is attached at tryptophan 59. The propeptide occupies 63-69 (FAGVNAA). Tryptophan 70 is lipidated: 3'-prenyl-2',N2-cyclotryptophan; partial. Positions 70 to 80 (WLNGDNNWSTP) form a cross-link, cyclopeptide (Trp-Pro). Leucine 71 is modified (D-leucine; partial). Tryptophan 77 carries 3'-prenyl-2',N2-cyclotryptophan; partial lipidation. The propeptide occupies 81-87 (FAADGAE).

Post-translationally, kawaguchipeptin A contains a D-Leu and 2 prenylated Trp, whereas kawaguchipeptin B only contains unmodified amino acids. Kawaguchipeptin A is prenylated in vivo. Upon expression in E.coli of the whole operon, Trp residues are prenylated by C-prenyltransferase KgpF. Prenylation by KgpF is likely the last enzymatic step in the biosynthetic maturation of kawaguchipeptin A.

In terms of biological role, both kawaguchipeptin A and B, which only differ by post-translational modifications, have antibacterial activities, since they inhibit the growth of the Gram-positive bacterium S.aureus at a concentration of 1 ug/mL. The sequence is that of Kawaguchipeptin peptide from Microcystis aeruginosa (strain NIES-88 / KW-MA1-3).